The chain runs to 354 residues: DNA polymerase IV (354 aa).

The 182-residue stretch at 6-187 (IIHIDCDCFY…LPVARLHGVG (182 aa)) folds into the UmuC domain. Residues aspartate 10 and aspartate 105 each coordinate Mg(2+). Glutamate 106 is an active-site residue.

The protein belongs to the DNA polymerase type-Y family. As to quaternary structure, monomer. Mg(2+) is required as a cofactor.

The protein localises to the cytoplasm. It catalyses the reaction DNA(n) + a 2'-deoxyribonucleoside 5'-triphosphate = DNA(n+1) + diphosphate. Poorly processive, error-prone DNA polymerase involved in untargeted mutagenesis. Copies undamaged DNA at stalled replication forks, which arise in vivo from mismatched or misaligned primer ends. These misaligned primers can be extended by PolIV. Exhibits no 3'-5' exonuclease (proofreading) activity. May be involved in translesional synthesis, in conjunction with the beta clamp from PolIII. This is DNA polymerase IV from Pseudomonas entomophila (strain L48).